The sequence spans 353 residues: MSAQNLSFVLQGIHQVKFEDRPIPELKDPHGVIVNVRFTGICGSDVHYWEHGSIGQFVVKDPMVLGHESSGVITKVGSAVTTLKVGDRVAMEPGIPCRRCEPCKAGKYNLCYEMAFAATPPYDGTLAKYYALPEDFCYKLPEQITLQEGALMEPLGVAVHIVRQAAVTPGQSVVVFGAGPVGLLCCAVARAFGASKIVAVDIQKPRLEFAKNYAATAIFEPAKVAAQENAARLIAENDLGPGADVAIDASGAEPSVHTGIHVLRTGGTYVQGGMGRSEMNFPIMAACTKELNVKGSFRYGSGDYKLAVELVASGRVNVKELITGVVKFEEAEQAFKEVKAGKGIKTLISGIEA.

Cys42, His67, and Glu68 together coordinate Zn(2+). Residue 177–182 (GAGPVG) participates in NAD(+) binding.

It belongs to the zinc-containing alcohol dehydrogenase family. It depends on Zn(2+) as a cofactor.

The catalysed reaction is xylitol + NAD(+) = D-xylulose + NADH + H(+). It participates in carbohydrate degradation; L-arabinose degradation via L-arabinitol; D-xylulose 5-phosphate from L-arabinose (fungal route): step 4/5. Xylitol dehydrogenase which catalyzes the conversion of xylitol to D-xylulose. Xylose is a major component of hemicelluloses such as xylan. Most fungi utilize D-xylose via three enzymatic reactions, xylose reductase (XR), xylitol dehydrogenase (XDH), and xylulokinase, to form xylulose 5-phosphate, which enters pentose phosphate pathway. The protein is Probable D-xylulose reductase A (xdhA) of Aspergillus terreus (strain NIH 2624 / FGSC A1156).